Consider the following 548-residue polypeptide: MADIPAATPSATPFPPELLRDVERRRTFGIISHPDAGKTTLTEKLLLFGGAIQLAGTVKARKSARHATSDWMEVEKQRGISVSSSVMQFEYAGHTINLLDTPGHQDFSEDTYRVLTAVDAAVMVIDAAKGVETQTIKLLEVCRLRNTPIITFINKMDREVRESFDLLQEIEEVLKIDCAPITWPIGMGKTFRGVYHLLEDRVLRFTPGEEKRSEAEVIKGIANAQLDELFPLEVGKLREEVDLIQGASNPFSLGDFLAGKQTPVFFGSGINNFGVQEILQALLDWAPPPQPRVAGVTVADTRLVMPAEAPFSGFVFKIQANMDPKHRDRIAFFRICSGRYSSGMKVKHVRMGREMKLANALTFMANERVLMEDGVAGDIIGIHNHGQLHIGDTLTEGENLGYKGIPYFSPELFSAARLRDPLKSKQLQKGLQELGEEGAIQVFEQEGGNMLLGAVGQLQFEVVAQRLKDEYKVDAIFESADIYTARWLVFPDEVTRRNFEREQGIRVGKDVDGNPVYLATSRYNLEVTMEKWPKVGFHATREHGEKLS.

Residues 23–290 (ERRRTFGIIS…ALLDWAPPPQ (268 aa)) form the tr-type G domain. Residues 32–39 (SHPDAGKT), 100–104 (DTPGH), and 154–157 (NKMD) each bind GTP.

This sequence belongs to the TRAFAC class translation factor GTPase superfamily. Classic translation factor GTPase family. PrfC subfamily.

The protein localises to the cytoplasm. In terms of biological role, increases the formation of ribosomal termination complexes and stimulates activities of RF-1 and RF-2. It binds guanine nucleotides and has strong preference for UGA stop codons. It may interact directly with the ribosome. The stimulation of RF-1 and RF-2 is significantly reduced by GTP and GDP, but not by GMP. The protein is Peptide chain release factor 3 of Aromatoleum aromaticum (strain DSM 19018 / LMG 30748 / EbN1) (Azoarcus sp. (strain EbN1)).